The following is a 208-amino-acid chain: Rac-like GTP-binding protein ARAC8 (208 aa).

15 to 22 (GDGAVGKT) is a GTP binding site. Positions 37–45 (YIPTVFDNF) match the Effector region motif. GTP contacts are provided by residues 62-66 (DTAGQ) and 120-123 (TKMD). S-palmitoyl cysteine attachment occurs at residues cysteine 199 and cysteine 205.

It belongs to the small GTPase superfamily. Rho family. Interacts with ICR1. Binds to SPK1. Post-translationally, although this sequence has a C-terminal -CXXX, it is palmitoylated at Cys-205, rather than prenylated.

The protein resides in the membrane. Acts as a negative regulator of abscisic acid (ABA) responses. The chain is Rac-like GTP-binding protein ARAC8 (ARAC8) from Arabidopsis thaliana (Mouse-ear cress).